A 572-amino-acid chain; its full sequence is MEYWKHTNHGKDAGNELETSMATHGNKLTNKIIYILWTIILVLLSIVFIIVLINSIKSEKAHESLLQDINNEFMEITEKIQMASDNTNDLIQSGVNTRLLTIQSHVQNYIPISLTQQMSDLRKFISEITIRNDNQEVLPQRITHDVGIKPLNPDDFWRCTSGLPSLMKTPKIRLMPGPGLLAMPTTVDGCVRTPSLVINDLIYAYTSNLITRGCQDIGKSYQVLQIGTITVNSDLVPDLNPRISHTFNINDNRKSCSLALLNTDVYQLCSTPKVDERSDYASSGIEDIVLDIVNYDGSISTTRFKNNNISFDQPYAALYPSVGPGIYYKGKIIFLGYGGLEHPINENVICNTTGCPGKTQRDCNQASHSPWFSDRRMVNSIIVVDKGLNSIPKLKVWTISMRQNYWGSEGRLLLLGNKIYIYTRSTSWHSKLQLGIIDITDYSDIRIKWTWHNVLSRPGNNECPWGHSCPDGCITGVYTDAYPLNPTGSIVSSVILDSQKSRVNPVITYSTATERVNELAIRNRTLSAGYTTTSCITHYNKGYCFHIVEINQKSLNTFQPMLFKTEIPKSCS.

The Intravirion portion of the chain corresponds to 1–31 (MEYWKHTNHGKDAGNELETSMATHGNKLTNK). Residues 32 to 52 (IIYILWTIILVLLSIVFIIVL) form a helical membrane-spanning segment. Residues 53 to 572 (INSIKSEKAH…FKTEIPKSCS (520 aa)) are Virion surface-facing. 2 cysteine pairs are disulfide-bonded: C190-C214 and C256-C269. The interval 252 to 257 (NRKSCS) is involved in neuraminidase activity. N308 and N351 each carry an N-linked (GlcNAc...) asparagine; by host glycan. Intrachain disulfides connect C355–C469 and C463–C473. A glycan (N-linked (GlcNAc...) asparagine; by host) is linked at N523. C535 and C544 are joined by a disulfide.

It belongs to the paramyxoviruses hemagglutinin-neuraminidase family. Homotetramer; composed of disulfide-linked homodimers. Interacts with F protein trimer.

Its subcellular location is the virion membrane. The protein localises to the host cell membrane. The catalysed reaction is Hydrolysis of alpha-(2-&gt;3)-, alpha-(2-&gt;6)-, alpha-(2-&gt;8)- glycosidic linkages of terminal sialic acid residues in oligosaccharides, glycoproteins, glycolipids, colominic acid and synthetic substrates.. Functionally, attaches the virus to sialic acid-containing cell receptors and thereby initiating infection. Binding of HN protein to the receptor induces a conformational change that allows the F protein to trigger virion/cell membranes fusion. Neuraminidase activity ensures the efficient spread of the virus by dissociating the mature virions from the neuraminic acid containing glycoproteins. The polypeptide is Hemagglutinin-neuraminidase (HN) (Homo sapiens (Human)).